The primary structure comprises 489 residues: Protein TOS4 (489 aa).

2 stretches are compositionally biased toward polar residues: residues 1–10 (MSSQFPSSPY) and 20–32 (NYKQ…SSNY). The disordered stretch occupies residues 1–101 (MSSQFPSSPY…FSSKLSSPSR (101 aa)). S40 bears the Phosphoserine mark. Residues 56 to 68 (PSSSIGRVSSPVR) show a composition bias toward polar residues. Residues 89–100 (SPKFSSKLSSPS) show a composition bias toward low complexity. Position 100 is a phosphoserine (S100). The FHA domain occupies 118-170 (ITVGRNSSQCDVALCKNKFISRVHASITYLPQTNEVKIHCFSMNGLIVTYRKQ). The interval 316–366 (SSPLSSVSSVDHEEQTLRQDSLSSDKNPMTMKKPKLNKRVLPSKPKKSVKE) is disordered. Residues 333–342 (RQDSLSSDKN) show a composition bias toward polar residues.

This sequence belongs to the PLM2/TOS4 family. Phosphorylated by CDC28.

Its subcellular location is the nucleus. Its function is as follows. Binds to the promoters of genes with functions important for the G1/S (start) transition; primarily genes involved in pheromone response, polarized growth and transcription. This chain is Protein TOS4 (TOS4), found in Saccharomyces cerevisiae (strain ATCC 204508 / S288c) (Baker's yeast).